We begin with the raw amino-acid sequence, 690 residues long: Protease 2 (690 aa).

Catalysis depends on charge relay system residues S534, D619, and H654.

Belongs to the peptidase S9A family.

The enzyme catalyses Hydrolysis of -Arg-|-Xaa- and -Lys-|-Xaa- bonds in oligopeptides, even when P1' residue is proline.. Cleaves peptide bonds on the C-terminal side of lysyl and argininyl residues. The protein is Protease 2 (ptrB) of Moraxella lacunata.